The primary structure comprises 97 residues: Coiled-coil domain-containing protein 167 (97 aa).

Residues 36 to 80 (LRKMELTEEGRKSLEKEKSSLSSRLSNYERELKSLRHENRKNMLL) adopt a coiled-coil conformation. Residues 78–95 (MLLSVAIFLLFAVGYYCW) form a helical membrane-spanning segment.

The protein localises to the membrane. The polypeptide is Coiled-coil domain-containing protein 167 (ccdc167) (Xenopus tropicalis (Western clawed frog)).